We begin with the raw amino-acid sequence, 340 residues long: Phosphoribosylformylglycinamidine cyclo-ligase (340 aa).

It belongs to the AIR synthase family.

Its subcellular location is the cytoplasm. It carries out the reaction 2-formamido-N(1)-(5-O-phospho-beta-D-ribosyl)acetamidine + ATP = 5-amino-1-(5-phospho-beta-D-ribosyl)imidazole + ADP + phosphate + H(+). It functions in the pathway purine metabolism; IMP biosynthesis via de novo pathway; 5-amino-1-(5-phospho-D-ribosyl)imidazole from N(2)-formyl-N(1)-(5-phospho-D-ribosyl)glycinamide: step 2/2. The chain is Phosphoribosylformylglycinamidine cyclo-ligase from Streptococcus pyogenes serotype M28 (strain MGAS6180).